Consider the following 287-residue polypeptide: Prohibitin-1 (287 aa).

Residues 102 to 116 (VLQLPAIYQNLGLDY) are interaction with ATG8. Residues 109–112 (YQNL) carry the AIM motif. A coiled-coil region spans residues 180 to 224 (EFTKAVEQKQIAQQDAERAKFLVEKAEQERQASVIRAEGEAESAE). The tract at residues 264–287 (SQHSGGGNSESSGSPNSLLLNIGR) is disordered. Positions 272–287 (SESSGSPNSLLLNIGR) are enriched in low complexity.

Belongs to the prohibitin family. As to quaternary structure, the mitochondrial prohibitin complex consists of two subunits (PHB1 and PHB2). The subunits assemble into a membrane-associated ring-shaped supercomplex of approximately 1 mDa. The mitochondrial prohibitin complex interacts with the m-AAA protease, a heterohexamer composed of YTA12/RCA1 and YTA10/AFG3. The mitochondrial prohibitin complex interacts with ATG8 and the interaction may support mitophagosome assembly. The N-terminus is blocked.

The protein resides in the mitochondrion inner membrane. Prohibitin probably acts as a holdase/unfoldase for the stabilization of newly synthesized mitochondrial proteins. Involved in mitophagy; may act as an adapter for ATG8 that supports mitophagosome assembly. Negatively regulates the proteolytic processing of ATG32 via the i-AAA protease. Acts as a negative regulator of the m-AAA protease. This is Prohibitin-1 (PHB1) from Saccharomyces cerevisiae (strain ATCC 204508 / S288c) (Baker's yeast).